We begin with the raw amino-acid sequence, 175 residues long: Arginine repressor (175 aa).

The disordered stretch occupies residues 1 to 23 (MSVSTPERGGAEQGKGPAIARTR).

The protein belongs to the ArgR family.

The protein resides in the cytoplasm. It functions in the pathway amino-acid biosynthesis; L-arginine biosynthesis [regulation]. In terms of biological role, regulates arginine biosynthesis genes. In Nocardia farcinica (strain IFM 10152), this protein is Arginine repressor.